The following is a 178-amino-acid chain: Caveolin-1 (178 aa).

An N-acetylserine modification is found at Ser2. Ser2 is subject to Phosphoserine. Residues 2 to 94 (SGGKYVDSEG…WKASFTTFTV (93 aa)) are required for homooligomerization. Residues 2-104 (SGGKYVDSEG…TKYWFYRLLS (103 aa)) are Cytoplasmic-facing. The residue at position 5 (Lys5) is an N6-acetyllysine; alternate. Residue Lys5 forms a Glycyl lysine isopeptide (Lys-Gly) (interchain with G-Cter in ubiquitin); alternate linkage. Phosphotyrosine is present on Tyr6. At Ser9 the chain carries Phosphoserine. The residue at position 14 (Tyr14) is a Phosphotyrosine; by ABL1 and INSR. Phosphotyrosine is present on Tyr25. Glycyl lysine isopeptide (Lys-Gly) (interchain with G-Cter in ubiquitin) cross-links involve residues Lys26, Lys30, Lys39, Lys47, and Lys57. Residues 82-94 (DGIWKASFTTFTV) are interaction with CAVIN3. Positions 105 to 125 (TIFGIPMALIWGIYFAILSFL) form an intramembrane region, helical. At 126 to 178 (HIWAVVPCIKSFLIEIQCISRVYSIYVHTFCDPLFEAIGKIFSNIRISTQKEI) the chain is on the cytoplasmic side. The tract at residues 131–142 (VPCIKSFLIEIQ) is interacts with SPRY1, SPRY2, SPRY3 and SPRY4. S-palmitoyl cysteine attachment occurs at residues Cys133, Cys143, and Cys156. The tract at residues 149–160 (SIYVHTFCDPLF) is interacts with SPRY1, SPRY2, and SPRY4. The tract at residues 167–178 (FSNIRISTQKEI) is interacts with SPRY1, SPRY2, SPRY3 and SPRY4.

It belongs to the caveolin family. Homooligomer. Interacts (via the N-terminus) with DPP4; the interaction is direct. Forms a stable heterooligomeric complex with CAV2 that targets to lipid rafts and drives caveolae formation. Interacts with BMX, BTK, CTNNB1, CDH1, GLIPR2, JUP, NOSTRIN, SNAP25 and STX1A. Interacts with SLC7A9. Interacts with TGFBR1. Interacts with CTNNB1, CDH1 and JUP. Interacts with PACSIN2; this interaction induces membrane tubulation. Interacts with CAVIN3 (via leucine-zipper domain) in a cholesterol-sensitive manner. Interacts with EHD2 in a cholesterol-dependent manner. Interacts with CAVIN1. Forms a ternary complex with UBXN6 and VCP; mediates CAV1 targeting to lysosomes for degradation. Interacts with ABCG1; this interaction regulates ABCG1-mediated cholesterol efflux. Interacts with NEU3; this interaction enhances NEU3 sialidase activity within caveola. Interacts (via C-terminus) with SPRY1, SPRY2 (via C-terminus), SPRY3, and SPRY4. Interacts with IGFBP5; this interaction allows trafficking of IGFBP5 from the plasma membrane to the nucleus. The N-terminus of both isoforms are blocked. In terms of processing, phosphorylated at Tyr-14 by ABL1 in response to oxidative stress. Post-translationally, ubiquitinated. Undergo monoubiquitination and multi- and/or polyubiquitination. Monoubiquitination of N-terminal lysines promotes integration in a ternary complex with UBXN6 and VCP which promotes oligomeric CAV1 targeting to lysosomes for degradation. Ubiquitinated by ZNRF1; leading to degradation and modulation of the TLR4-mediated immune response. As to expression, adipose tissue, lung, heart, skeletal muscle, stomach, small bowel, kidney, spleen and testis (at protein level).

The protein localises to the golgi apparatus membrane. Its subcellular location is the cell membrane. It localises to the membrane. The protein resides in the caveola. It is found in the membrane raft. The protein localises to the golgi apparatus. Its subcellular location is the trans-Golgi network. May act as a scaffolding protein within caveolar membranes. Forms a stable heterooligomeric complex with CAV2 that targets to lipid rafts and drives caveolae formation. Mediates the recruitment of CAVIN proteins (CAVIN1/2/3/4) to the caveolae. Interacts directly with G-protein alpha subunits and can functionally regulate their activity. Involved in the costimulatory signal essential for T-cell receptor (TCR)-mediated T-cell activation. Its binding to DPP4 induces T-cell proliferation and NF-kappa-B activation in a T-cell receptor/CD3-dependent manner. Recruits CTNNB1 to caveolar membranes and may regulate CTNNB1-mediated signaling through the Wnt pathway. Negatively regulates TGFB1-mediated activation of SMAD2/3 by mediating the internalization of TGFBR1 from membrane rafts leading to its subsequent degradation. Binds 20(S)-hydroxycholesterol (20(S)-OHC). The chain is Caveolin-1 (Cav1) from Mus musculus (Mouse).